Consider the following 700-residue polypeptide: Long chain acyl-CoA synthetase 7, peroxisomal (700 aa).

The interval 1–29 (MEFASPEQRRLETIRSHIDTSPTNDQSSS) is disordered. Residues 7–18 (EQRRLETIRSHI) are compositionally biased toward basic and acidic residues. Positions 10-18 (RLETIRSHI) match the Microbody targeting signal motif. The span at 19-29 (DTSPTNDQSSS) shows a compositional bias: polar residues. ATP is bound at residue 266–277 (ICYTSGTTGTPK). Residues 526 to 550 (DGWLHTGDIGLWLPGGRLKIIDRKK) are fatty acid-binding. A Microbody targeting signal motif is present at residues 698–700 (SKL).

It belongs to the ATP-dependent AMP-binding enzyme family. Interacts with PEX5. Mg(2+) is required as a cofactor. As to expression, expressed in roots, stems, leaves flowers and germinating seedling. Preferentially expressed in seeds.

It localises to the peroxisome. It carries out the reaction a long-chain fatty acid + ATP + CoA = a long-chain fatty acyl-CoA + AMP + diphosphate. The catalysed reaction is decanoate + ATP + CoA = decanoyl-CoA + AMP + diphosphate. The enzyme catalyses dodecanoate + ATP + CoA = dodecanoyl-CoA + AMP + diphosphate. It catalyses the reaction tetradecanoate + ATP + CoA = tetradecanoyl-CoA + AMP + diphosphate. It carries out the reaction hexadecanoate + ATP + CoA = hexadecanoyl-CoA + AMP + diphosphate. The catalysed reaction is (9Z)-octadecenoate + ATP + CoA = (9Z)-octadecenoyl-CoA + AMP + diphosphate. The enzyme catalyses (9Z,12Z)-octadecadienoate + ATP + CoA = (9Z,12Z)-octadecadienoyl-CoA + AMP + diphosphate. It catalyses the reaction (9Z,12Z,15Z)-octadecatrienoate + ATP + CoA = (9Z,12Z,15Z)-octadecatrienoyl-CoA + AMP + diphosphate. Its pathway is lipid metabolism; fatty acid metabolism. Its function is as follows. Activation of long-chain fatty acids for both synthesis of cellular lipids, and degradation via beta-oxidation. Preferentially uses palmitate, palmitoleate, oleate, linoleate and eicosenoate as substrates. Can use myristate and linolenate as substrates. Functions redundantly with LACS6 in lipid mobilization for beta-oxidation during seed germination, which is essential for postgerminative growth and seedling establishment. In Arabidopsis thaliana (Mouse-ear cress), this protein is Long chain acyl-CoA synthetase 7, peroxisomal.